The following is a 348-amino-acid chain: Dihydroorotase (348 aa).

Zn(2+) is bound by residues histidine 17 and histidine 19. Substrate is bound by residues 19-21 and asparagine 45; that span reads HLR. Lysine 103, histidine 140, and histidine 178 together coordinate Zn(2+). Position 103 is an N6-carboxylysine (lysine 103). Histidine 140 lines the substrate pocket. A substrate-binding site is contributed by leucine 223. Position 251 (aspartate 251) interacts with Zn(2+). Aspartate 251 is an active-site residue. Residues histidine 255 and alanine 267 each contribute to the substrate site.

The protein belongs to the metallo-dependent hydrolases superfamily. DHOase family. Class II DHOase subfamily. As to quaternary structure, homodimer. It depends on Zn(2+) as a cofactor.

The enzyme catalyses (S)-dihydroorotate + H2O = N-carbamoyl-L-aspartate + H(+). Its pathway is pyrimidine metabolism; UMP biosynthesis via de novo pathway; (S)-dihydroorotate from bicarbonate: step 3/3. Its function is as follows. Catalyzes the reversible cyclization of carbamoyl aspartate to dihydroorotate. The protein is Dihydroorotase of Salmonella newport (strain SL254).